The chain runs to 335 residues: MSTLRALRAVLCVYAVGIAVALAQLLRRLRGDFRPPVLPPQPGRVAIVTGATAGIGRSTARQLARLGMCVVVAGNDEHRGQEVVSSIRAEMGSDRAHFLPLDLASLASVRGFARDFQALGLPLHLLVNNAGVMLEPRAETEDGFERHLGVNFLGHFLLTLLLLPALRASGAEGRGSRVVTVGSATHYVGTVDMADLHGRHAYSPYAAYAQSKLALALFALQLQRILDARGDPVTSNMADPGVVDTELYRHAGWVLRTAKRFLGWLVFKSPEEGAWTLVYAAAAPELEGVGGRYLRDEAEAEPLGTARDQELQRRLWAEGLRLTGAGGGDSDGVAW.

NAD(+) is bound by residues Ile55, Tyr208, Lys212, and Thr245. The active-site Proton acceptor is Tyr208.

This sequence belongs to the short-chain dehydrogenases/reductases (SDR) family.

It is found in the lipid droplet. The protein resides in the secreted. The catalysed reaction is a di-trans,poly-cis-polyprenol + NAD(+) = a di-trans,poly-cis-polyprenal + NADH + H(+). The enzyme catalyses a di-trans,poly-cis-polyprenol + NADP(+) = a di-trans,poly-cis-polyprenal + NADPH + H(+). It carries out the reaction a di-trans,poly-cis-dolichol + NADP(+) = a di-trans,poly-cis-dolichal + NADPH + H(+). It catalyses the reaction a di-trans,poly-cis-dolichol + NAD(+) = a di-trans,poly-cis-dolichal + NADH + H(+). Its pathway is protein modification; protein glycosylation. Its function is as follows. Oxidoreductase that plays a key role in early steps of protein N-linked glycosylation by mediating two non-consecutive steps in dolichol biosynthesis. Acts both as a NAD(+)-dependent dehydrogenase and as a NADPH-dependent reductase during the conversion of polyprenol into dolichol. First catalyzes the NAD(+)-dependent dehydrogenation of polyprenol into polyprenal; polyprenal is then reduced into dolichal by SRD5A3. It then catalyzes the NADPH-dependent reduction of dolichal into dolichol. May also acts as a positive regulator of starvation-induced autophagy. This is Polyprenol dehydrogenase (Dhrsx) from Mus musculus (Mouse).